The following is a 178-amino-acid chain: Ribosome maturation factor RimM (178 aa).

Positions 101–178 (ADEYYWYQLE…VMRVEWDADF (78 aa)) constitute a PRC barrel domain.

It belongs to the RimM family. Binds ribosomal protein uS19.

Its subcellular location is the cytoplasm. Functionally, an accessory protein needed during the final step in the assembly of 30S ribosomal subunit, possibly for assembly of the head region. Essential for efficient processing of 16S rRNA. May be needed both before and after RbfA during the maturation of 16S rRNA. It has affinity for free ribosomal 30S subunits but not for 70S ribosomes. The polypeptide is Ribosome maturation factor RimM (Pseudomonas fluorescens (strain Pf0-1)).